Reading from the N-terminus, the 112-residue chain is Protein ORF1 (112 aa).

Positions 1 to 10 (MEGTDWSGWG) are enriched in low complexity. Positions 1–20 (MEGTDWSGWGDDSDFPWPKG) are disordered. The chain crosses the membrane as a helical span at residues 51–71 (IAFVILIVSLFVLLLGVLLAC).

Its subcellular location is the host membrane. This chain is Protein ORF1, found in Snake adenovirus serotype 1 (SnAdV-1).